The sequence spans 102 residues: Small ribosomal subunit protein uS10 (102 aa).

Belongs to the universal ribosomal protein uS10 family. As to quaternary structure, part of the 30S ribosomal subunit.

In terms of biological role, involved in the binding of tRNA to the ribosomes. This Salinispora tropica (strain ATCC BAA-916 / DSM 44818 / JCM 13857 / NBRC 105044 / CNB-440) protein is Small ribosomal subunit protein uS10.